The chain runs to 144 residues: MNFKYIVAVSFLIASAYARSVKNDEQSLSQRDVLDEESLREFRGIGGALLSAGKSALKGLAKGLAEHFASGKRTAEDHEVMKRLEAVMRDLDSLDYPEEATERETRGFNQEEIANLFTKKEKRILGPVLGLVGNALGGLIKKIG.

The N-terminal stretch at 1 to 18 is a signal peptide; that stretch reads MNFKYIVAVSFLIASAYA. Positions 19-43 are excised as a propeptide; the sequence is RSVKNDEQSLSQRDVLDEESLREFR. S70 is subject to Serine amide. Residues 74-123 constitute a propeptide that is removed on maturation; that stretch reads TAEDHEVMKRLEAVMRDLDSLDYPEEATERETRGFNQEEIANLFTKKEKR. The residue at position 143 (I143) is an Isoleucine amide.

It belongs to the bombinin family. As to expression, expressed by the skin glands.

The protein localises to the secreted. Maximin-10 shows antimicrobial activity against bacteria and against the fungus C.albicans. It has little hemolytic activity. In terms of biological role, maximin-H3 shows antibacterial activity against both Gram-positive and Gram-negative bacteria. It also shows antimicrobial activity against the fungus C.albicans. Shows strong hemolytic activity. In Bombina maxima (Giant fire-bellied toad), this protein is Maximins 10/H3.